Reading from the N-terminus, the 414-residue chain is NFATC2-interacting protein (414 aa).

The segment at 1 to 42 (MAEPLRRRGPRSRGGRASRGARRARAARGRCPRAPRSPTRLI) is disordered. Basic residues predominate over residues 7 to 33 (RRGPRSRGGRASRGARRARAARGRCPR). Residues Ser52 and Ser54 each carry the phosphoserine modification. Residues 63–118 (ADPGEVPVARLPAPAAPEQDSDSDSEGAAEGPAGAPRTLVRRRRRLLDPGEAPVVP) are disordered. Over residues 68–79 (VPVARLPAPAAP) the composition is skewed to low complexity. Phosphoserine occurs at positions 83, 85, and 87. Low complexity predominate over residues 90–100 (AAEGPAGAPRT). At Ser121 the chain carries Phosphoserine. A Glycyl lysine isopeptide (Lys-Gly) (interchain with G-Cter in SUMO2) cross-link involves residue Lys123. The disordered stretch occupies residues 139–208 (KLCPSEPEDE…SSRNKSRKHT (70 aa)). Positions 170 to 229 (KKKLRKKHEKEEKKMEEFPDQDISPLPQPSSRNKSRKHTEALQKLREVNKRLQDLRSCLS) form a coiled coil. A phosphoserine mark is found at Ser193, Ser199, and Ser309. Phosphothreonine is present on residues Thr311 and Thr313. Residues 343–414 (LRLRVQGKEK…ESGDLIEVWG (72 aa)) form the Ubiquitin-like domain. Phosphoserine occurs at positions 364 and 385.

As to quaternary structure, interacts with NFATC2, TRAF1, TRAF2 and PRMT1. Interacts with UBE2I/UBC9. Post-translationally, methylation at the N-terminus by PRMT1 modulates interaction with the NFAT complex and results in augmented cytokine production.

It is found in the nucleus. It localises to the cytoplasm. In T-helper 2 (Th2) cells, regulates the magnitude of NFAT-driven transcription of a specific subset of cytokine genes, including IL3, IL4, IL5 and IL13, but not IL2. Recruits PRMT1 to the IL4 promoter; this leads to enhancement of histone H4 'Arg-3'-methylation and facilitates subsequent histone acetylation at the IL4 locus, thus promotes robust cytokine expression. Down-regulates formation of poly-SUMO chains by UBE2I/UBC9. In Rattus norvegicus (Rat), this protein is NFATC2-interacting protein (Nfatc2ip).